The sequence spans 616 residues: FNIP repeat-containing protein DDB_G0290639 (616 aa).

A coiled-coil region spans residues 239-274; it reads FENNNNNNNNNNNNNNNNNNNNNNNNNNNNNKKTEK. The span at 241–269 shows a compositional bias: low complexity; sequence NNNNNNNNNNNNNNNNNNNNNNNNNNNNN. The segment at 241–270 is disordered; that stretch reads NNNNNNNNNNNNNNNNNNNNNNNNNNNNNK. 6 FNIP repeats span residues 337-379, 380-421, 423-464, 466-508, 509-550, and 552-593; these read FEES…FNDG, FNQS…KLCN, FSQP…VFYD, FNQL…FSDG, FNQT…LIDS, and FQQP…ILDK.

The sequence is that of FNIP repeat-containing protein DDB_G0290639 from Dictyostelium discoideum (Social amoeba).